The chain runs to 281 residues: ATP phosphoribosyltransferase (281 aa).

The protein belongs to the ATP phosphoribosyltransferase family. Long subfamily. Mg(2+) is required as a cofactor.

It is found in the cytoplasm. The catalysed reaction is 1-(5-phospho-beta-D-ribosyl)-ATP + diphosphate = 5-phospho-alpha-D-ribose 1-diphosphate + ATP. It participates in amino-acid biosynthesis; L-histidine biosynthesis; L-histidine from 5-phospho-alpha-D-ribose 1-diphosphate: step 1/9. Feedback inhibited by histidine. Catalyzes the condensation of ATP and 5-phosphoribose 1-diphosphate to form N'-(5'-phosphoribosyl)-ATP (PR-ATP). Has a crucial role in the pathway because the rate of histidine biosynthesis seems to be controlled primarily by regulation of HisG enzymatic activity. This is ATP phosphoribosyltransferase from Corynebacterium diphtheriae (strain ATCC 700971 / NCTC 13129 / Biotype gravis).